Here is a 323-residue protein sequence, read N- to C-terminus: MADQDVDLDSIIDRLLEVRGSRPGKQVQLLESEIRYLCTKAREIFISQPILLELEAPIKICGDIHGQYYDLLRLFEYGGFPPEANYLFLGDYVDRGKQSLETICLLLAYKIKYPENFFVLRGNHECASINRIYGFYDECKRRYNIKLWKTFTDCFNCLPIAAIIDEKIFTMHGGLSPDLNSMEQIRRVMRPTDIPDCGLLCDLLWSDPDKDITGWSENDRGVSFTFGPDVVSRFLQKHDMDLICRAHQVVEDGYEFFSKRQLVTLFSAPNYCGEFDNAGAMMSVDESLLCSFQILKPAEKKQKYVYGAMSSGRPITPPRKQKK.

Mn(2+) contacts are provided by Asp63, His65, Asp91, and Asn123. His124 functions as the Proton donor in the catalytic mechanism. Residues His172 and His247 each contribute to the Mn(2+) site.

Belongs to the PPP phosphatase family. PP-1 subfamily. The cofactor is Mn(2+).

The catalysed reaction is O-phospho-L-seryl-[protein] + H2O = L-seryl-[protein] + phosphate. It catalyses the reaction O-phospho-L-threonyl-[protein] + H2O = L-threonyl-[protein] + phosphate. In terms of biological role, plays an important role in the control of mitosis by reversing the action of the nimA kinase. This is Serine/threonine-protein phosphatase PP1 (bimG) from Emericella nidulans (strain FGSC A4 / ATCC 38163 / CBS 112.46 / NRRL 194 / M139) (Aspergillus nidulans).